The following is a 589-amino-acid chain: Arylsulfatase L (589 aa).

Positions 1 to 31 (MLHLHHSCLCFRSWLPAMLAVLLSLAPSASS) are cleaved as a signal peptide. Positions 46 and 47 each coordinate Ca(2+). A glycan (N-linked (GlcNAc...) asparagine) is linked at Asn58. Cys86 is a binding site for Ca(2+). Cys86 serves as the catalytic Nucleophile. Cys86 is modified (3-oxoalanine (Cys)). Asn125 carries N-linked (GlcNAc...) asparagine glycosylation. Lys145 serves as a coordination point for substrate. His147 is a catalytic residue. N-linked (GlcNAc...) asparagine glycosylation is present at Asn258. His301 serves as a coordination point for substrate. Asn344 carries an N-linked (GlcNAc...) asparagine glycan. The Ca(2+) site is built by Asp353 and His354. Lys378 contributes to the substrate binding site.

It belongs to the sulfatase family. Ca(2+) serves as cofactor. In terms of processing, N-glycosylated. The conversion to 3-oxoalanine (also known as C-formylglycine, FGly), of a serine or cysteine residue in prokaryotes and of a cysteine residue in eukaryotes, is critical for catalytic activity. In terms of tissue distribution, expressed in the pancreas, liver and kidney.

Its subcellular location is the golgi apparatus. The protein localises to the golgi stack. It carries out the reaction an aryl sulfate + H2O = a phenol + sulfate + H(+). Inhibited by millimolar concentrations of warfarin. Functionally, exhibits arylsulfatase activity towards the artificial substrate 4-methylumbelliferyl sulfate. May be essential for the correct composition of cartilage and bone matrix during development. Has no activity toward steroid sulfates. The protein is Arylsulfatase L of Homo sapiens (Human).